Consider the following 315-residue polypeptide: uncharacterized protein (315 aa).

Topologically, residues 1–38 are cytoplasmic; it reads MDVLLSLPQPELFKTTVIPFLANRNIIKSEAILSNLHS. The chain crosses the membrane as a helical span at residues 39–59; it reads IFYVAIFYHIWFLFGKWILFP. Topologically, residues 60–101 are lumenal; that stretch reads HLVKWKLDYDQKHNVKKDEKTTSERQAQHYKKKYTSLINQSS. The TLC domain occupies 95–302; it reads SLINQSSVHL…MVSVAAKVLK (208 aa). Residues 102–122 form a helical membrane-spanning segment; that stretch reads VHLISLLQSIVVLYYSLKFLL. Residues 123–144 are Cytoplasmic-facing; it reads DPKASAEPYQTSHSRVFTENRD. A helical membrane pass occupies residues 145–165; the sequence is TQVICIFAIGYFVWDIYISTM. The Lumenal portion of the chain corresponds to 166-170; that stretch reads YSTFP. Residues 171 to 190 form a helical membrane-spanning segment; it reads FVVHGIISTVVFCIGLKPYI. Residues 191 to 225 lie on the Cytoplasmic side of the membrane; that stretch reads QYYAPVFLMFELSNPSLNFRWFGIKFLPQKSKFCS. A helical membrane pass occupies residues 226-246; the sequence is LLLLLNNLTLMVVFFAARIAW. Residues 247 to 264 lie on the Lumenal side of the membrane; sequence GWFQIGKLCYDFYQVRNE. The chain crosses the membrane as a helical span at residues 265-285; that stretch reads PGFLVFDTIVILAGNFVLDIL. Over 286-315 the chain is Cytoplasmic; that stretch reads NVIWFSTMVSVAAKVLKKGESVDKVTKNEQ.

The protein resides in the endoplasmic reticulum membrane. This is an uncharacterized protein from Saccharomyces cerevisiae (strain ATCC 204508 / S288c) (Baker's yeast).